We begin with the raw amino-acid sequence, 190 residues long: 3-isopropylmalate dehydratase small subunit (190 aa).

The protein belongs to the LeuD family. LeuD type 1 subfamily. Heterodimer of LeuC and LeuD.

The catalysed reaction is (2R,3S)-3-isopropylmalate = (2S)-2-isopropylmalate. It participates in amino-acid biosynthesis; L-leucine biosynthesis; L-leucine from 3-methyl-2-oxobutanoate: step 2/4. Catalyzes the isomerization between 2-isopropylmalate and 3-isopropylmalate, via the formation of 2-isopropylmaleate. This chain is 3-isopropylmalate dehydratase small subunit, found in Staphylococcus aureus (strain USA300).